Consider the following 26-residue polypeptide: Dermaseptin-B5 (26 aa).

Residue Val26 is modified to Valine amide.

Belongs to the frog skin active peptide (FSAP) family. Dermaseptin subfamily. As to expression, expressed by the skin glands.

It is found in the secreted. In terms of biological role, possesses a potent antimicrobial activity against Gram-positive and Gram-negative bacteria. Probably acts by disturbing membrane functions with its amphipathic structure. The chain is Dermaseptin-B5 from Phyllomedusa bicolor (Two-colored leaf frog).